The sequence spans 764 residues: Thyrotropin receptor (764 aa).

The N-terminal stretch at 1–20 (MRPADLLQLVLLLDLPRDLG) is a signal peptide. Residues 21–413 (GMGCSSPPCE…EFNPCEDIMG (393 aa)) are Extracellular-facing. Cysteines 31 and 41 form a disulfide. Asn77, Asn99, and Asn113 each carry an N-linked (GlcNAc...) asparagine glycan. LRR repeat units follow at residues 100–124 (LSKV…ALKE), 125–150 (LPLL…VYST), 152–174 (IFFI…AFQG), 176–199 (CNET…AFNG), 200–223 (TKLD…AFGG), 227–248 (GPSL…GLEH), and 250–271 (KELI…SFLH). 2 N-linked (GlcNAc...) asparagine glycosylation sites follow: Asn177 and Asn198. An N-linked (GlcNAc...) asparagine glycan is attached at Asn302. Tyr385 carries the sulfotyrosine modification. The chain crosses the membrane as a helical span at residues 414 to 441 (YKFLRIVVWFVSLLALLGNVFVLLILLT). At 442–450 (SHYKLNVPR) the chain is on the cytoplasmic side. Residues 451 to 473 (FLMCNLAFADFCMGMYLLLIASV) form a helical membrane-spanning segment. Topologically, residues 474–494 (DLYTHSEYYNHAIDWQTGPGC) are extracellular. A disulfide bridge links Cys494 with Cys569. The chain crosses the membrane as a helical span at residues 495–517 (NTAGFFTVFASELSVYTLTVITL). Residues 518-537 (ERWYAITFAMRLDRKIRLRH) are Cytoplasmic-facing. Residues 538–560 (ACAIMVGGWVCCFLLALLPLVGI) traverse the membrane as a helical segment. Topologically, residues 561-580 (SSYAKVSICLPMDTETPLAL) are extracellular. The helical transmembrane segment at 581–602 (AYIVFVLTLNIVAFVIVCCCYV) threads the bilayer. Over 603–625 (KIYITVRNPQYNPGDKDTKIAKR) the chain is Cytoplasmic. Residues 626–649 (MAVLIFTDFICMAPISFYALSAIL) form a helical membrane-spanning segment. Topologically, residues 650 to 660 (NKPLITVSNSK) are extracellular. Residues 661–682 (ILLVLFYPLNSCANPFLYAIFT) traverse the membrane as a helical segment. Topologically, residues 683-764 (KAFQRDVFIL…ISEEYMQTVL (82 aa)) are cytoplasmic. The PDZ-binding motif lies at 762–764 (TVL).

This sequence belongs to the G-protein coupled receptor 1 family. FSH/LSH/TSH subfamily. In terms of assembly, interacts with heterodimer GPHA2:GPHB5; this interaction stimulates cAMP production. Interacts (via the PDZ-binding motif) with SCRIB; regulates TSHR trafficking and function. Post-translationally, glycosylated. Sulfated. Sulfation on Tyr-385 plays a role in thyrotropin receptor binding and activation. As to expression, expressed in thyroide cells (at protein level). Expressed in the thyroid.

Its subcellular location is the cell membrane. The protein localises to the basolateral cell membrane. Functionally, receptor for the thyroid-stimulating hormone (TSH) or thyrotropin. Also acts as a receptor for the heterodimeric glycoprotein hormone (GPHA2:GPHB5) or thyrostimulin. The activity of this receptor is mediated by G proteins which activate adenylate cyclase. Plays a central role in controlling thyroid cell metabolism. The protein is Thyrotropin receptor (TSHR) of Homo sapiens (Human).